We begin with the raw amino-acid sequence, 456 residues long: Alcohol acyltransferase 1 (456 aa).

Residues H166 and D382 each act as proton acceptor in the active site.

This sequence belongs to the plant acyltransferase family.

Functionally, involved in the biosynthesis of volatile esters which confer kiwifruit flavor. Alcohol acyl transferase that can use a wide range of alcohols as substrate to produce esters. The chain is Alcohol acyltransferase 1 from Actinidia chinensis var. chinensis (Chinese soft-hair kiwi).